The chain runs to 236 residues: Urease accessory protein UreF (236 aa).

The protein belongs to the UreF family. As to quaternary structure, ureD, UreF and UreG form a complex that acts as a GTP-hydrolysis-dependent molecular chaperone, activating the urease apoprotein by helping to assemble the nickel containing metallocenter of UreC. The UreE protein probably delivers the nickel.

Its subcellular location is the cytoplasm. In terms of biological role, required for maturation of urease via the functional incorporation of the urease nickel metallocenter. This is Urease accessory protein UreF from Synechocystis sp. (strain ATCC 27184 / PCC 6803 / Kazusa).